The following is a 67-amino-acid chain: Large ribosomal subunit protein bL31 (67 aa).

Zn(2+) contacts are provided by Cys-16, Cys-18, Cys-36, and Cys-39.

Belongs to the bacterial ribosomal protein bL31 family. Type A subfamily. Part of the 50S ribosomal subunit. Zn(2+) serves as cofactor.

Functionally, binds the 23S rRNA. The sequence is that of Large ribosomal subunit protein bL31 from Treponema denticola (strain ATCC 35405 / DSM 14222 / CIP 103919 / JCM 8153 / KCTC 15104).